Here is a 224-residue protein sequence, read N- to C-terminus: Protein-L-isoaspartate O-methyltransferase (224 aa).

Ser70 is a catalytic residue.

This sequence belongs to the methyltransferase superfamily. L-isoaspartyl/D-aspartyl protein methyltransferase family.

The protein resides in the cytoplasm. It carries out the reaction [protein]-L-isoaspartate + S-adenosyl-L-methionine = [protein]-L-isoaspartate alpha-methyl ester + S-adenosyl-L-homocysteine. Functionally, catalyzes the methyl esterification of L-isoaspartyl residues in peptides and proteins that result from spontaneous decomposition of normal L-aspartyl and L-asparaginyl residues. It plays a role in the repair and/or degradation of damaged proteins. This is Protein-L-isoaspartate O-methyltransferase from Cellvibrio japonicus (strain Ueda107) (Pseudomonas fluorescens subsp. cellulosa).